A 524-amino-acid chain; its full sequence is Leukotriene-B4 omega-hydroxylase 3 (524 aa).

Glu-328 and Cys-468 together coordinate heme.

Belongs to the cytochrome P450 family. Heme serves as cofactor.

The protein resides in the endoplasmic reticulum membrane. It is found in the microsome membrane. It carries out the reaction leukotriene B4 + reduced [NADPH--hemoprotein reductase] + O2 = 20-hydroxy-leukotriene B4 + oxidized [NADPH--hemoprotein reductase] + H2O + H(+). It participates in lipid metabolism; leukotriene B4 degradation. Its function is as follows. Cytochromes P450 are a group of heme-thiolate monooxygenases. Catalyzes the omega-hydroxylation of LTB4. The polypeptide is Leukotriene-B4 omega-hydroxylase 3 (Cyp4f14) (Mus musculus (Mouse)).